We begin with the raw amino-acid sequence, 539 residues long: Monocarboxylate transporter 8 (539 aa).

The tract at residues 1 to 92 (MALQSQASEE…VETRGTARGF (92 aa)) is disordered. Ala2 is modified (N-acetylalanine). The Cytoplasmic segment spans residues 2-96 (ALQSQASEEA…GTARGFQPPE (95 aa)). The span at 31–41 (PESEPEPEPEP) shows a compositional bias: acidic residues. The span at 42 to 64 (EPVPVPPPEPQPEPQPLPDPAPL) shows a compositional bias: pro residues. A helical transmembrane segment spans residues 97-117 (GGFGWVVVFAATWCNGSIFGI). Over 118–143 (HNSVGILYSMLLEEEKEKNRQVEFQA) the chain is Extracellular. The chain crosses the membrane as a helical span at residues 144–164 (AWVGALAMGMIFFCSPIVSIF). At 165 to 171 (TDRLGCR) the chain is on the cytoplasmic side. Residues 172-192 (ITATAGAAVAFIGLHTSSFTS) form a helical membrane-spanning segment. At 193–200 (SLSLRYFT) the chain is on the extracellular side. A helical transmembrane segment spans residues 201 to 221 (YGILFGCGCSFAFQPSLVILG). Topologically, residues 222–229 (HYFQRRLG) are cytoplasmic. A helical membrane pass occupies residues 230-250 (LANGVVSAGSSIFSMSFPFLI). At 251–258 (RMLGDKIK) the chain is on the extracellular side. The helical transmembrane segment at 259-279 (LAQTFQVLSTFMFVLMLLSLT) threads the bilayer. The Cytoplasmic portion of the chain corresponds to 280 to 322 (YRPLLPSSQDTPSKRGVRTLHQRFLAQLRKYFNMRVFRQRTYR). The chain crosses the membrane as a helical span at residues 323–343 (IWAFGIAAAALGYFVPYVHLM). At 344–356 (KYVEEEFSEIKET) the chain is on the extracellular side. A helical transmembrane segment spans residues 357-377 (WVLLVCIGATSGLGRLVSGHI). Topologically, residues 378–386 (SDSIPGLKK) are cytoplasmic. A helical membrane pass occupies residues 387–407 (IYLQVLSFLLLGLMSMMIPLC). The Extracellular portion of the chain corresponds to 408–409 (RD). A helical membrane pass occupies residues 410–430 (FGGLIVVCLFLGLCDGFFITI). The Cytoplasmic segment spans residues 431–447 (MAPIAFELVGPMQASQA). Residues 448–468 (IGYLLGMMALPMIAGPPIAGL) traverse the membrane as a helical segment. At 469 to 477 (LRNCFGDYH) the chain is on the extracellular side. A helical transmembrane segment spans residues 478–498 (VAFYFAGVPPIIGAVILFFVP). Over 499-539 (LMHQRMFKKEQRDSSKDKMLAPDPDPNGELLPGSPNPEEPI) the chain is Cytoplasmic. Basic and acidic residues predominate over residues 508–518 (EQRDSSKDKML). The interval 508 to 539 (EQRDSSKDKMLAPDPDPNGELLPGSPNPEEPI) is disordered.

This sequence belongs to the major facilitator superfamily. Monocarboxylate porter (TC 2.A.1.13) family. In terms of assembly, monomer. Homodimer. Homooligomer. In terms of tissue distribution, highly expressed in liver and heart. In adult brain tissue expression is largely confined to endothelial cells of the blood-brain barrier (at protein level).

The protein resides in the cell membrane. It localises to the apical cell membrane. It catalyses the reaction 3,3',5-triiodo-L-thyronine(out) = 3,3',5-triiodo-L-thyronine(in). The catalysed reaction is L-thyroxine(out) = L-thyroxine(in). The enzyme catalyses 3,3',5'-triiodo-L-thyronine(out) = 3,3',5'-triiodo-L-thyronine(in). It carries out the reaction 3,3'-diiodo-L-thyronine(out) = 3,3'-diiodo-L-thyronine(in). Its function is as follows. Specific thyroid hormone transmembrane transporter, that mediates both uptake and efflux of thyroid hormones across the cell membrane independently of pH or a Na(+) gradient. Major substrates are the iodothyronines T3 and T4 and to a lesser extent rT3 and 3,3-diiodothyronine (3,3'-T2). Acts as an important mediator of thyroid hormone transport, especially T3, through the blood-brain barrier. This is Monocarboxylate transporter 8 (SLC16A2) from Homo sapiens (Human).